Here is a 132-residue protein sequence, read N- to C-terminus: Small ribosomal subunit protein uS8 (132 aa).

It belongs to the universal ribosomal protein uS8 family. In terms of assembly, part of the 30S ribosomal subunit. Contacts proteins S5 and S12.

In terms of biological role, one of the primary rRNA binding proteins, it binds directly to 16S rRNA central domain where it helps coordinate assembly of the platform of the 30S subunit. This chain is Small ribosomal subunit protein uS8, found in Leptospira biflexa serovar Patoc (strain Patoc 1 / Ames).